A 660-amino-acid polypeptide reads, in one-letter code: DNA primase (660 aa).

A CHC2-type zinc finger spans residues 40–64; that stretch reads CPFHKEKTPSFTVSPDKQFYYCFGC. Residues 94–115 form a disordered region; sequence GMEVPREQGRRDQKPRQPTDSP. The segment covering 97–110 has biased composition (basic and acidic residues); sequence VPREQGRRDQKPRQ. Residues 261–343 form the Toprim domain; the sequence is DEIIVVEGYM…GRRARFLFLP (83 aa). The Mg(2+) site is built by E267, D311, and D313. 2 disordered regions span residues 425–449 and 476–519; these read DPQQVEQLAQQAPATSSMPDYDPGY and QAWK…APVE. A compositionally biased stretch (polar residues) spans 428-442; the sequence is QVEQLAQQAPATSSM. Residues 488-498 are compositionally biased toward basic and acidic residues; it reads PWSDKPWDKNR.

Belongs to the DnaG primase family. Monomer. Interacts with DnaB. Zn(2+) serves as cofactor. The cofactor is Mg(2+).

It catalyses the reaction ssDNA + n NTP = ssDNA/pppN(pN)n-1 hybrid + (n-1) diphosphate.. RNA polymerase that catalyzes the synthesis of short RNA molecules used as primers for DNA polymerase during DNA replication. The sequence is that of DNA primase from Pseudomonas putida (strain ATCC 47054 / DSM 6125 / CFBP 8728 / NCIMB 11950 / KT2440).